The sequence spans 185 residues: Elongation factor P (185 aa).

This sequence belongs to the elongation factor P family.

It is found in the cytoplasm. Its pathway is protein biosynthesis; polypeptide chain elongation. Functionally, involved in peptide bond synthesis. Stimulates efficient translation and peptide-bond synthesis on native or reconstituted 70S ribosomes in vitro. Probably functions indirectly by altering the affinity of the ribosome for aminoacyl-tRNA, thus increasing their reactivity as acceptors for peptidyl transferase. The sequence is that of Elongation factor P from Salinispora arenicola (strain CNS-205).